Consider the following 249-residue polypeptide: BPI fold-containing family A member 1 (249 aa).

The first 15 residues, 1–15 (MFQVAGLIVFCGLLA), serve as a signal peptide directing secretion. Positions 81–86 (LLGGLL) are important for surfactant activity and antibacterial properties. N-linked (GlcNAc...) asparagine glycosylation is present at N151. Residues C173 and C217 are joined by a disulfide bond.

This sequence belongs to the BPI/LBP/Plunc superfamily. Plunc family. As to quaternary structure, monomer. Interacts (via N-terminus) with SCNN1B, a subunit of the heterotrimeric epithelial sodium channel (ENaC); this inhibits proteolytic activation of ENaC. Expressed in lung and trachea.

It is found in the secreted. Functionally, lipid-binding protein which shows high specificity for the surfactant phospholipid dipalmitoylphosphatidylcholine (DPPC). Plays a role in the innate immune responses of the upper airways. Reduces the surface tension in secretions from airway epithelia and inhibits the formation of biofilm by pathogenic Gram-negative bacteria, such as P.aeruginosa and K.pneumoniae. Negatively regulates proteolytic cleavage of SCNN1G, an event that is required for activation of the epithelial sodium channel (ENaC), and thereby contributes to airway surface liquid homeostasis and proper clearance of mucus. Plays a role in the airway inflammatory response after exposure to irritants. May attract macrophages and neutrophils. The protein is BPI fold-containing family A member 1 (BPIFA1) of Sus scrofa (Pig).